The following is a 220-amino-acid chain: Large ribosomal subunit protein bL9 (220 aa).

Residues 167–184 show a composition bias toward low complexity; the sequence is AAAEVEQAEDVAAAEQQD. A disordered region spans residues 167 to 220; sequence AAAEVEQAEDVAAAEQQDSSPVDDHADDADGATGGEGRDEGAGDASDGEEMPST.

The protein belongs to the bacterial ribosomal protein bL9 family.

In terms of biological role, binds to the 23S rRNA. The sequence is that of Large ribosomal subunit protein bL9 from Anaplasma marginale (strain St. Maries).